A 559-amino-acid chain; its full sequence is 5'-AMP-activated protein kinase catalytic subunit alpha-1 (559 aa).

The region spanning 27-279 (YILGDTLGVG…IKDIREHEWF (253 aa)) is the Protein kinase domain. Residue threonine 32 is modified to Phosphothreonine. ATP is bound by residues 33–41 (LGVGTFGKV) and lysine 56. The active-site Proton acceptor is the aspartate 150. The residue at position 183 (threonine 183) is a Phosphothreonine; by LKB1 and CaMKK2. Phosphothreonine occurs at positions 269 and 355. An AIS region spans residues 302–381 (EALKEVCEKF…PERVPFLVAE (80 aa)). Serine 356 is modified (phosphoserine). Phosphoserine; by ULK1 is present on serine 360. Position 368 is a phosphothreonine; by ULK1 (threonine 368). The residue at position 382 (threonine 382) is a Phosphothreonine. Phosphoserine is present on residues serine 397, serine 467, and serine 486. The span at 485–505 (KSGTATPQRSGSVSNYRSCQR) shows a compositional bias: polar residues. The interval 485–536 (KSGTATPQRSGSVSNYRSCQRSDSDAEAQGKSSEVSLTSSVTSLDSSPVDLT) is disordered. 2 positions are modified to phosphothreonine: threonine 488 and threonine 490. Phosphoserine occurs at positions 496, 508, 524, and 527. Residues 516-535 (SSEVSLTSSVTSLDSSPVDL) are compositionally biased toward low complexity.

This sequence belongs to the protein kinase superfamily. CAMK Ser/Thr protein kinase family. SNF1 subfamily. As to quaternary structure, AMPK is a heterotrimer of an alpha catalytic subunit (PRKAA1 or PRKAA2), a beta (PRKAB1 or PRKAB2) and a gamma non-catalytic subunits (PRKAG1, PRKAG2 or PRKAG3). Interacts with FNIP1 and FNIP2. (Microbial infection) Interacts with Dengue type 2 virus non-structural protein 1; this interaction promotes the AMPK/ERK/mTOR signaling pathway to induce autophagy. It depends on Mg(2+) as a cofactor. In terms of processing, ubiquitinated. Post-translationally, phosphorylated at Thr-183 by STK11/LKB1 in complex with STE20-related adapter-alpha (STRADA) pseudo kinase and CAB39. Also phosphorylated at Thr-183 by CAMKK2; triggered by a rise in intracellular calcium ions, without detectable changes in the AMP/ATP ratio. CAMKK1 can also phosphorylate Thr-183, but at a much lower level. Dephosphorylated by protein phosphatase 2A and 2C (PP2A and PP2C). Phosphorylated by ULK1 and ULK2; leading to negatively regulate AMPK activity and suggesting the existence of a regulatory feedback loop between ULK1, ULK2 and AMPK. Dephosphorylated by PPM1A and PPM1B. Glycosylated; O-GlcNAcylated by OGT, promoting the AMP-activated protein kinase (AMPK) activity.

The protein localises to the cytoplasm. It localises to the nucleus. It carries out the reaction L-seryl-[protein] + ATP = O-phospho-L-seryl-[protein] + ADP + H(+). It catalyses the reaction L-threonyl-[protein] + ATP = O-phospho-L-threonyl-[protein] + ADP + H(+). The enzyme catalyses L-seryl-[acetyl-CoA carboxylase] + ATP = O-phospho-L-seryl-[acetyl-CoA carboxylase] + ADP + H(+). The catalysed reaction is L-seryl-[3-hydroxy-3-methylglutaryl-coenzyme A reductase] + ATP = O-phospho-L-seryl-[3-hydroxy-3-methylglutaryl-coenzyme A reductase] + ADP + H(+). It carries out the reaction L-seryl-[tau protein] + ATP = O-phospho-L-seryl-[tau protein] + ADP + H(+). It catalyses the reaction L-threonyl-[tau protein] + ATP = O-phospho-L-threonyl-[tau protein] + ADP + H(+). Activated by phosphorylation on Thr-183. Binding of AMP to non-catalytic gamma subunit (PRKAG1, PRKAG2 or PRKAG3) results in allosteric activation, inducing phosphorylation on Thr-183. AMP-binding to gamma subunit also sustains activity by preventing dephosphorylation of Thr-183. ADP also stimulates Thr-183 phosphorylation, without stimulating already phosphorylated AMPK. ATP promotes dephosphorylation of Thr-183, rendering the enzyme inactive. Under physiological conditions AMPK mainly exists in its inactive form in complex with ATP, which is much more abundant than AMP. AMPK is activated by antihyperglycemic drug metformin, a drug prescribed to patients with type 2 diabetes: in vivo, metformin seems to mainly inhibit liver gluconeogenesis. However, metformin can be used to activate AMPK in muscle and other cells in culture or ex vivo. Selectively inhibited by compound C (6-[4-(2-Piperidin-1-yl-ethoxy)-phenyl)]-3-pyridin-4-yl-pyyrazolo[1,5-a] pyrimidine. Activated by resveratrol, a natural polyphenol present in red wine, and S17834, a synthetic polyphenol. Catalytic subunit of AMP-activated protein kinase (AMPK), an energy sensor protein kinase that plays a key role in regulating cellular energy metabolism. In response to reduction of intracellular ATP levels, AMPK activates energy-producing pathways and inhibits energy-consuming processes: inhibits protein, carbohydrate and lipid biosynthesis, as well as cell growth and proliferation. AMPK acts via direct phosphorylation of metabolic enzymes, and by longer-term effects via phosphorylation of transcription regulators. Regulates lipid synthesis by phosphorylating and inactivating lipid metabolic enzymes such as ACACA, ACACB, GYS1, HMGCR and LIPE; regulates fatty acid and cholesterol synthesis by phosphorylating acetyl-CoA carboxylase (ACACA and ACACB) and hormone-sensitive lipase (LIPE) enzymes, respectively. Promotes lipolysis of lipid droplets by mediating phosphorylation of isoform 1 of CHKA (CHKalpha2). Regulates insulin-signaling and glycolysis by phosphorylating IRS1, PFKFB2 and PFKFB3. AMPK stimulates glucose uptake in muscle by increasing the translocation of the glucose transporter SLC2A4/GLUT4 to the plasma membrane, possibly by mediating phosphorylation of TBC1D4/AS160. Regulates transcription and chromatin structure by phosphorylating transcription regulators involved in energy metabolism such as CRTC2/TORC2, FOXO3, histone H2B, HDAC5, MEF2C, MLXIPL/ChREBP, EP300, HNF4A, p53/TP53, SREBF1, SREBF2 and PPARGC1A. Acts as a key regulator of glucose homeostasis in liver by phosphorylating CRTC2/TORC2, leading to CRTC2/TORC2 sequestration in the cytoplasm. In response to stress, phosphorylates 'Ser-36' of histone H2B (H2BS36ph), leading to promote transcription. Acts as a key regulator of cell growth and proliferation by phosphorylating FNIP1, TSC2, RPTOR, WDR24 and ATG1/ULK1: in response to nutrient limitation, negatively regulates the mTORC1 complex by phosphorylating RPTOR component of the mTORC1 complex and by phosphorylating and activating TSC2. Also phosphorylates and inhibits GATOR2 subunit WDR24 in response to nutrient limitation, leading to suppress glucose-mediated mTORC1 activation. In response to energetic stress, phosphorylates FNIP1, inactivating the non-canonical mTORC1 signaling, thereby promoting nuclear translocation of TFEB and TFE3, and inducing transcription of lysosomal or autophagy genes. In response to nutrient limitation, promotes autophagy by phosphorylating and activating ATG1/ULK1. In that process, it also activates WDR45/WIPI4. Phosphorylates CASP6, thereby preventing its autoprocessing and subsequent activation. In response to nutrient limitation, phosphorylates transcription factor FOXO3 promoting FOXO3 mitochondrial import. Also acts as a regulator of cellular polarity by remodeling the actin cytoskeleton; probably by indirectly activating myosin. AMPK also acts as a regulator of circadian rhythm by mediating phosphorylation of CRY1, leading to destabilize it. May regulate the Wnt signaling pathway by phosphorylating CTNNB1, leading to stabilize it. Also has tau-protein kinase activity: in response to amyloid beta A4 protein (APP) exposure, activated by CAMKK2, leading to phosphorylation of MAPT/TAU; however the relevance of such data remains unclear in vivo. Also phosphorylates CFTR, EEF2K, KLC1, NOS3 and SLC12A1. Regulates hepatic lipogenesis. Activated via SIRT3, represses sterol regulatory element-binding protein (SREBP) transcriptional activities and ATP-consuming lipogenesis to restore cellular energy balance. Upon stress, regulates mitochondrial fragmentation through phosphorylation of MTFR1L. The chain is 5'-AMP-activated protein kinase catalytic subunit alpha-1 from Homo sapiens (Human).